We begin with the raw amino-acid sequence, 373 residues long: Gametogenetin-binding protein 1 (373 aa).

Disordered regions lie at residues 26–113 and 237–268; these read VGSK…GSQT and KAQR…AVDE. Residues 36–49 are compositionally biased toward polar residues; sequence NRPLNRSQPSSSPE. A required for induction of mitochondrial fragmentation region spans residues 226-373; sequence LYKQLQKSAM…DEMGNWPPPE (148 aa). Basic and acidic residues predominate over residues 254–263; that stretch reads SPTEERGERE. The interaction with GGN stretch occupies residues 301-373; that stretch reads KTFRSTDTVG…DEMGNWPPPE (73 aa).

In terms of assembly, interacts with CCDC159. Interacts with GGN.

The protein resides in the cytoplasm. Its subcellular location is the membrane. It localises to the golgi apparatus. The protein localises to the mitochondrion intermembrane space. Its function is as follows. Induces mitochondrial fragmentation, possibly by promoting DNM1L-dependent fission and may play a role in mitochondrial morphogenesis during spermatogenesis. This Rattus norvegicus (Rat) protein is Gametogenetin-binding protein 1 (Ggnbp1).